The following is a 267-amino-acid chain: Matrilysin (267 aa).

The N-terminal stretch at 1-20 (MAAMRLTLFRIVCLLPGCLA) is a signal peptide. Positions 21 to 97 (LPLSQEAGEV…PRCGVPDVAE (77 aa)) are cleaved as a propeptide — activation peptide. The Cysteine switch motif lies at 88 to 95 (PRCGVPDV). Residue cysteine 90 participates in Zn(2+) binding. Aspartate 156 provides a ligand contact to Ca(2+). Zn(2+) contacts are provided by histidine 166 and aspartate 168. Residues aspartate 173, glycine 174, glycine 176, and threonine 178 each coordinate Ca(2+). A Zn(2+)-binding site is contributed by histidine 181. Ca(2+) is bound by residues glycine 188, glycine 190, and aspartate 192. A Zn(2+)-binding site is contributed by histidine 194. Ca(2+) contacts are provided by aspartate 196 and glutamate 199. Histidine 217 serves as a coordination point for Zn(2+). Glutamate 218 is a catalytic residue. Zn(2+) contacts are provided by histidine 221 and histidine 227.

It belongs to the peptidase M10A family. The cofactor is Ca(2+). Zn(2+) is required as a cofactor.

It localises to the secreted. It is found in the extracellular space. The protein localises to the extracellular matrix. The catalysed reaction is Cleavage of 14-Ala-|-Leu-15 and 16-Tyr-|-Leu-17 in B chain of insulin. No action on collagen types I, II, IV, V. Cleaves gelatin chain alpha2(I) &gt; alpha1(I).. In terms of biological role, degrades casein, gelatins of types I, III, IV, and V, and fibronectin. Activates procollagenase. This Rattus norvegicus (Rat) protein is Matrilysin (Mmp7).